Reading from the N-terminus, the 400-residue chain is Lysophospholipid transporter LplT (400 aa).

12 helical membrane passes run 19–39 (VIVA…ATLA), 53–73 (VLQM…GQIA), 91–111 (AGAA…LVGI), 139–159 (LMEA…GVLA), 164–184 (IAAL…NLFI), 195–213 (SWRL…VVLW), 227–247 (LFWG…PVAL), 257–277 (YLNA…AKLV), 281–301 (TVSR…IFSL), 304–324 (ALLP…FFVV), 352–372 (NSAM…GVPA), and 373–393 (VAIG…LWIW).

The protein belongs to the major facilitator superfamily. LplT (TC 2.A.1.42) family.

Its subcellular location is the cell inner membrane. Functionally, catalyzes the facilitated diffusion of 2-acyl-glycero-3-phosphoethanolamine (2-acyl-GPE) into the cell. In Salmonella newport (strain SL254), this protein is Lysophospholipid transporter LplT.